A 402-amino-acid chain; its full sequence is Phosphomevalonate dehydratase large subunit (402 aa).

(R)-5-phosphomevalonate-binding residues include Gly48, Ala49, Ser50, Asn79, and Pro80. Cys122 serves as a coordination point for [4Fe-4S] cluster. The (R)-5-phosphomevalonate site is built by Glu145 and Ser146. [4Fe-4S] cluster is bound by residues Cys297 and Cys356. Position 377 (Lys377) interacts with (R)-5-phosphomevalonate.

Belongs to the AcnX type II large subunit family. Heterodimer composed of a large subunit (PMDh-L) and a small subunit (PMDh-S). [4Fe-4S] cluster serves as cofactor.

It catalyses the reaction (R)-5-phosphomevalonate = (2E)-3-methyl-5-phosphooxypent-2-enoate + H2O. It functions in the pathway isoprenoid biosynthesis; isopentenyl diphosphate biosynthesis via mevalonate pathway. With respect to regulation, neither the addition of 1 mM Mg(2+) nor 1 mM Mn(2+) has a significant effect on the activity, whereas Zn(2+) causes almost complete inactivation. Strongly inhibited by H(2)O(2), but not by EDTA or iodoacetamide. Its function is as follows. Component of a hydro-lyase that catalyzes the dehydration of mevalonate 5-phosphate (MVA5P) to form trans-anhydromevalonate 5-phosphate (tAHMP). Involved in the archaeal mevalonate (MVA) pathway, which provides fundamental precursors for isoprenoid biosynthesis, such as isopentenyl diphosphate (IPP) and dimethylallyl diphosphate (DMAPP). The protein is Phosphomevalonate dehydratase large subunit of Aeropyrum pernix (strain ATCC 700893 / DSM 11879 / JCM 9820 / NBRC 100138 / K1).